The chain runs to 793 residues: Spindle and centriole-associated protein 1 (793 aa).

The segment at 1 to 29 (MSYLRASRTSSNLSLAKKPSKTRKKLQAR) is disordered. The segment covering 18–27 (KPSKTRKKLQ) has biased composition (basic residues). Residues 312–405 (SLGLLNSMIM…LTAEILSLKE (94 aa)) adopt a coiled-coil conformation. Residues 519–542 (KTVGNLSSHSAVPKRAANRLPSPP) form a disordered region. Positions 622–712 (LQNEDLVSQM…LLKLIEQQKQ (91 aa)) form a coiled coil. Polar residues predominate over residues 718–739 (PTLSPITPQGRRTGSSLDTTPL). The tract at residues 718–783 (PTLSPITPQG…RSQAANDRGE (66 aa)) is disordered. A compositionally biased stretch (low complexity) spans 740–753 (SSCSTSGRRSSGAS). Polar residues predominate over residues 754 to 778 (NKSESISTSVGSLRSASTGRRSQAA).

The protein localises to the cytoplasm. It localises to the cytoskeleton. It is found in the microtubule organizing center. The protein resides in the centrosome. Its subcellular location is the centriole. The protein localises to the spindle. Regulator required for centriole duplication. The protein is Spindle and centriole-associated protein 1 (spice1) of Xenopus laevis (African clawed frog).